Here is a 72-residue protein sequence, read N- to C-terminus: Disintegrin cereberin (72 aa).

A Disintegrin domain is found at 1-72 (EAGEECDCGS…SADCPRNRFH (72 aa)). Disulfide bonds link cysteine 6-cysteine 21, cysteine 8-cysteine 16, cysteine 15-cysteine 38, cysteine 29-cysteine 35, cysteine 34-cysteine 59, and cysteine 47-cysteine 66. Positions 51–53 (RGD) match the Cell attachment site motif. A disordered region spans residues 51 to 72 (RGDNPDDRCTGQSADCPRNRFH).

It belongs to the venom metalloproteinase (M12B) family. P-II subfamily. P-IIa sub-subfamily. As to quaternary structure, monomer (disintegrin). In terms of tissue distribution, expressed by the venom gland.

Its subcellular location is the secreted. Its function is as follows. Inhibits fibrinogen interaction with platelet. Acts by binding to alpha-IIb/beta-3 (ITGA2B/ITGB3) on the platelet surface and inhibits aggregation induced by ADP, thrombin, platelet-activating factor and collagen. This Crotalus cerberus (Arizona black rattlesnake) protein is Disintegrin cereberin.